Reading from the N-terminus, the 375-residue chain is Biotin synthase, mitochondrial (375 aa).

The transit peptide at 1-16 directs the protein to the mitochondrion; the sequence is MMSTIYRHLSTARPAL. Residues 81-310 form the Radical SAM core domain; the sequence is HDPTKVQLCT…IATARIVMPK (230 aa). Positions 99, 103, and 106 each coordinate [4Fe-4S] cluster. [2Fe-2S] cluster-binding residues include Cys-143, Cys-176, Cys-236, and Arg-314.

Belongs to the radical SAM superfamily. Biotin synthase family. Requires [4Fe-4S] cluster as cofactor. [2Fe-2S] cluster serves as cofactor.

The protein resides in the mitochondrion. It catalyses the reaction (4R,5S)-dethiobiotin + (sulfur carrier)-SH + 2 reduced [2Fe-2S]-[ferredoxin] + 2 S-adenosyl-L-methionine = (sulfur carrier)-H + biotin + 2 5'-deoxyadenosine + 2 L-methionine + 2 oxidized [2Fe-2S]-[ferredoxin]. It functions in the pathway cofactor biosynthesis; biotin biosynthesis; biotin from 7,8-diaminononanoate: step 2/2. In Saccharomyces cerevisiae (strain ATCC 204508 / S288c) (Baker's yeast), this protein is Biotin synthase, mitochondrial (BIO2).